Consider the following 124-residue polypeptide: Glycine cleavage system H protein (124 aa).

In terms of domain architecture, Lipoyl-binding spans 22 to 104; it reads VATVGITEFA…YGAGWLFRVE (83 aa). An N6-lipoyllysine modification is found at K63.

This sequence belongs to the GcvH family. As to quaternary structure, the glycine cleavage system is composed of four proteins: P, T, L and H. (R)-lipoate is required as a cofactor.

Functionally, the glycine cleavage system catalyzes the degradation of glycine. The H protein shuttles the methylamine group of glycine from the P protein to the T protein. The polypeptide is Glycine cleavage system H protein (Beutenbergia cavernae (strain ATCC BAA-8 / DSM 12333 / CCUG 43141 / JCM 11478 / NBRC 16432 / NCIMB 13614 / HKI 0122)).